Reading from the N-terminus, the 272-residue chain is MLTYPNIDPVAIHLGPLQVHWYGLMYLLAFLCAWGLASYRTKQRDGWTSDMVSDLVFYGALGVVLGGRIGYVLFYEFDKFLENPIWLFQVWTGGMSFHGGFLGVMIAMLFWCKKYQKTWFQTLDFIAPCVPTGLMLGRIGNFIGGELYGRAVTDPNYPFGMIFPTDPLHLVRHPSQIYQALCEGLLLFIILWWFSSKPRPRMAVSALFLMGYGVARFVMEFFRQPDADQGFILFGWMTKGQILTVPMLLIGLWMMWYAYQKKIYDWGPQKNS.

The next 7 membrane-spanning stretches (helical) occupy residues leucine 17–alanine 37, leucine 55–tyrosine 75, valine 90–phenylalanine 110, phenylalanine 125–glycine 145, proline 174–phenylalanine 194, methionine 202–phenylalanine 222, and glycine 230–isoleucine 250. Position 138 (arginine 138) interacts with a 1,2-diacyl-sn-glycero-3-phospho-(1'-sn-glycerol).

This sequence belongs to the Lgt family.

Its subcellular location is the cell inner membrane. It carries out the reaction L-cysteinyl-[prolipoprotein] + a 1,2-diacyl-sn-glycero-3-phospho-(1'-sn-glycerol) = an S-1,2-diacyl-sn-glyceryl-L-cysteinyl-[prolipoprotein] + sn-glycerol 1-phosphate + H(+). It functions in the pathway protein modification; lipoprotein biosynthesis (diacylglyceryl transfer). Functionally, catalyzes the transfer of the diacylglyceryl group from phosphatidylglycerol to the sulfhydryl group of the N-terminal cysteine of a prolipoprotein, the first step in the formation of mature lipoproteins. The polypeptide is Phosphatidylglycerol--prolipoprotein diacylglyceryl transferase (Acinetobacter baumannii (strain SDF)).